The following is a 406-amino-acid chain: Probable endo-xylogalacturonan hydrolase A (406 aa).

The N-terminal stretch at 1-18 is a signal peptide; that stretch reads MISLNSIFLLSLVGLSRA. Positions 20 to 49 are disordered; it reads PSRSETSPDRTIKPRAACTPTAGGSSSTDD. 6 PbH1 repeats span residues 183–213, 214–235, 237–257, 266–289, 299–320, and 368–390; these read TSNA…DIGA, STYV…AFKP, ANYV…SVGS, VQNV…KTYP, VKNA…QIQS, and TCDV…ILCG. Catalysis depends on Asp-228, which acts as the Proton donor. A glycan (N-linked (GlcNAc...) asparagine) is linked at Asn-244. The active site involves His-251. N-linked (GlcNAc...) asparagine glycosylation is found at Asn-273, Asn-278, and Asn-301.

The protein belongs to the glycosyl hydrolase 28 family.

It localises to the secreted. Functionally, pectinolytic enzyme involved in the degradation of xylogalacturonan (xga), a galacturonan backbone heavily substituted with xylose, and which is one important component of the hairy regions of pectin. Activity requires a galacturonic acid backbone substituted with xylose. This is Probable endo-xylogalacturonan hydrolase A (xghA) from Aspergillus flavus (strain ATCC 200026 / FGSC A1120 / IAM 13836 / NRRL 3357 / JCM 12722 / SRRC 167).